A 364-amino-acid polypeptide reads, in one-letter code: UDP-N-acetylglucosamine--N-acetylmuramyl-(pentapeptide) pyrophosphoryl-undecaprenol N-acetylglucosamine transferase (364 aa).

UDP-N-acetyl-alpha-D-glucosamine is bound by residues Thr10–Gly12, Asn124, Ser195, Ile250, and Gln295.

It belongs to the glycosyltransferase 28 family. MurG subfamily.

It is found in the cell membrane. The catalysed reaction is Mur2Ac(oyl-L-Ala-gamma-D-Glu-L-Lys-D-Ala-D-Ala)-di-trans,octa-cis-undecaprenyl diphosphate + UDP-N-acetyl-alpha-D-glucosamine = beta-D-GlcNAc-(1-&gt;4)-Mur2Ac(oyl-L-Ala-gamma-D-Glu-L-Lys-D-Ala-D-Ala)-di-trans,octa-cis-undecaprenyl diphosphate + UDP + H(+). It participates in cell wall biogenesis; peptidoglycan biosynthesis. Its function is as follows. Cell wall formation. Catalyzes the transfer of a GlcNAc subunit on undecaprenyl-pyrophosphoryl-MurNAc-pentapeptide (lipid intermediate I) to form undecaprenyl-pyrophosphoryl-MurNAc-(pentapeptide)GlcNAc (lipid intermediate II). In Levilactobacillus brevis (strain ATCC 367 / BCRC 12310 / CIP 105137 / JCM 1170 / LMG 11437 / NCIMB 947 / NCTC 947) (Lactobacillus brevis), this protein is UDP-N-acetylglucosamine--N-acetylmuramyl-(pentapeptide) pyrophosphoryl-undecaprenol N-acetylglucosamine transferase.